We begin with the raw amino-acid sequence, 111 residues long: Large ribosomal subunit protein uL23 (111 aa).

It belongs to the universal ribosomal protein uL23 family. As to quaternary structure, part of the 50S ribosomal subunit. Contacts protein L29, and trigger factor when it is bound to the ribosome.

Its function is as follows. One of the early assembly proteins it binds 23S rRNA. One of the proteins that surrounds the polypeptide exit tunnel on the outside of the ribosome. Forms the main docking site for trigger factor binding to the ribosome. This is Large ribosomal subunit protein uL23 from Chlamydia trachomatis serovar L2 (strain ATCC VR-902B / DSM 19102 / 434/Bu).